A 677-amino-acid polypeptide reads, in one-letter code: MHHLLEQSADMATALLAGEKLRELILPGAQDDKAGALAALLLQLKLELPFDRVVTIGTVLVPILLVTLVFTKNFAEEPIYCYTPHNFTRDQALYARGYCWTELRDALPGVDASLWPSLFEHKFLPYALLAFAAIMYVPALGWEFLASTRLTSELNFLLQEIDNCYHRAAEGRAPKIEKQIQSKGPGITEREKREIIENAEKEKSPEQNLFEKYLERRGRSNFLAKLYLARHVLILLLSAVPISYLCTYYATQKQNEFTCALGASPDGAAGAGPAVRVSCKLPSVQLQRIIAGVDIVLLCVMNLIILVNLIHLFIFRKSNFIFDKLHKVGIKTRRQWRRSQFCDINILAMFCNENRDHIKSLNRLDFITNESDLMYDNVVRQLLAALAQSNHDATPTVRDSGVQTVDPSANPAEPDGAAEPPVVKRPRKKMKWIPTSNPLPQPFKEPLAIMRVENSKAEKPKPARRKTATDTLIAPLLDRSAHHYKGGGGDPGPGPAPAPAPPPAPDKKHARHFSLDVHPYILGTKKAKAEAVPAALPASRSQEGGFLSQAEDCGLGLAPAPIKDAPLPEKEIPYPTEPARAGLPSGGPFHVRSPPAAPAVAPLTPASLGKAEPLTILSRNATHPLLHINTLYEAREEEDGGPRLPQDVGDLIAIPAPQQILIATFDEPRTVVSTVEF.

Over 11 to 47 (MATALLAGEKLRELILPGAQDDKAGALAALLLQLKLE) the chain is Cytoplasmic. A helical transmembrane segment spans residues 48–70 (LPFDRVVTIGTVLVPILLVTLVF). The Extracellular segment spans residues 71–123 (TKNFAEEPIYCYTPHNFTRDQALYARGYCWTELRDALPGVDASLWPSLFEHKF). N86 carries N-linked (GlcNAc...) asparagine glycosylation. The helical transmembrane segment at 124–146 (LPYALLAFAAIMYVPALGWEFLA) threads the bilayer. Over 147–226 (STRLTSELNF…RGRSNFLAKL (80 aa)) the chain is Cytoplasmic. Residues 227–249 (YLARHVLILLLSAVPISYLCTYY) traverse the membrane as a helical segment. Residues 250–292 (ATQKQNEFTCALGASPDGAAGAGPAVRVSCKLPSVQLQRIIAG) are Extracellular-facing. The helical transmembrane segment at 293 to 315 (VDIVLLCVMNLIILVNLIHLFIF) threads the bilayer. Residues 316 to 643 (RKSNFIFDKL…AREEEDGGPR (328 aa)) are Cytoplasmic-facing. 2 disordered regions span residues 393–423 (ATPTVRDSGVQTVDPSANPAEPDGAAEPPVV) and 454–510 (NSKA…KKHA). The segment covering 492–504 (GPGPAPAPAPPPA) has biased composition (pro residues). Position 593 is a phosphoserine (S593).

It belongs to the pannexin family. In terms of assembly, homoheptameric. In terms of processing, S-palmitoylated in neural stem and progenitor cells. Post-translationally, cleaved by CASP3 and CASP7 during apoptosis. Cleavage has no effect on it function.

Its subcellular location is the cell membrane. It is found in the golgi apparatus membrane. The protein localises to the endoplasmic reticulum membrane. It carries out the reaction ATP(in) = ATP(out). The enzyme catalyses chloride(in) = chloride(out). It catalyses the reaction iodide(out) = iodide(in). The catalysed reaction is Na(+)(in) = Na(+)(out). It carries out the reaction D-gluconate(in) = D-gluconate(out). In terms of biological role, ion channel with a slight anion preference. Also able to release ATP. Plays a role in regulating neurogenesis and apoptosis in keratinocytes. This is Pannexin-2 from Homo sapiens (Human).